Reading from the N-terminus, the 193-residue chain is dTTP/UTP pyrophosphatase (193 aa).

Aspartate 77 acts as the Proton acceptor in catalysis.

The protein belongs to the Maf family. YhdE subfamily. A divalent metal cation is required as a cofactor.

It localises to the cytoplasm. It carries out the reaction dTTP + H2O = dTMP + diphosphate + H(+). The catalysed reaction is UTP + H2O = UMP + diphosphate + H(+). Nucleoside triphosphate pyrophosphatase that hydrolyzes dTTP and UTP. May have a dual role in cell division arrest and in preventing the incorporation of modified nucleotides into cellular nucleic acids. In Bacteroides thetaiotaomicron (strain ATCC 29148 / DSM 2079 / JCM 5827 / CCUG 10774 / NCTC 10582 / VPI-5482 / E50), this protein is dTTP/UTP pyrophosphatase.